Consider the following 487-residue polypeptide: UDP-N-acetylmuramate--L-alanine ligase (487 aa).

Residue 122-128 (GTHGKTS) participates in ATP binding.

The protein belongs to the MurCDEF family.

The protein localises to the cytoplasm. It carries out the reaction UDP-N-acetyl-alpha-D-muramate + L-alanine + ATP = UDP-N-acetyl-alpha-D-muramoyl-L-alanine + ADP + phosphate + H(+). The protein operates within cell wall biogenesis; peptidoglycan biosynthesis. In terms of biological role, cell wall formation. The polypeptide is UDP-N-acetylmuramate--L-alanine ligase (Corynebacterium urealyticum (strain ATCC 43042 / DSM 7109)).